A 507-amino-acid polypeptide reads, in one-letter code: Inositol-3-phosphate synthase (507 aa).

NAD(+) contacts are provided by glycine 70, glycine 71, asparagine 72, asparagine 73, aspartate 143, isoleucine 180, glutamine 190, arginine 193, threonine 230, alanine 231, asparagine 232, threonine 233, glycine 281, serine 282, aspartate 306, serine 309, asparagine 340, asparagine 341, aspartate 342, lysine 355, alanine 391, aspartate 419, and serine 420.

The protein belongs to the myo-inositol 1-phosphate synthase family. The cofactor is NAD(+).

Its subcellular location is the cytoplasm. The protein resides in the cytosol. It localises to the nucleus. The enzyme catalyses D-glucose 6-phosphate = 1D-myo-inositol 3-phosphate. It participates in polyol metabolism; myo-inositol biosynthesis; myo-inositol from D-glucose 6-phosphate: step 1/2. In terms of biological role, key enzyme in myo-inositol biosynthesis pathway that catalyzes the conversion of glucose 6-phosphate to 1-myo-inositol 1-phosphate in a NAD-dependent manner. In Citrus paradisi (Grapefruit), this protein is Inositol-3-phosphate synthase.